Reading from the N-terminus, the 602-residue chain is MREHLNHLHKKVQELPTTSGCYKMYSQNNKILYIGKAKNLRARVKNYFLKRISHKTKILMRNVANIEVITTNSEYEALLLECNLIKEYKPDYNIKLKDDKGYPMIRITCEKYPRIFKTRKIINDGSEYFGPYVNAKNLDLVLDLINKTFKTRKCKKKSKTPCLYFHMGQCLGVCYREDLEEQYKKEVDKIRHILNGKISKLLDETEIKMKEAIKKEDFEAAIKLKETKRSLIEISQTQIITRMNKLSADYIYIHQTDSLNAIVILKYKDGKLVEKDINFDESIYEEDELTAKFITQYYTALNMIVPNKIYIFKKIETENITKLINELKNTKTEIICEETKETIKIMEMAISNAKIALREYDNEKNRALESLKNILEMTKLPKTIEGFDISHLNGHKTVASLVSFKMGKPFKDGYRVYKINSLNNGEIDDLKAIKEVISRRYSKLINEQLALPDLILIDGGKGQLSAAYSILKGLKIENEVIVCALAKKEEIIFLPNKTQGIKLSKGNPALQILQNVRDEAHRRANSFNRTLRRNIKLNYSKIKGIGEEKAKNILKTLGTYKDILLLNEDEIAKKMKINIKMAKKIKKFSEDQNLKNTYSIKS.

Residues 17–94 (TTSGCYKMYS…IKEYKPDYNI (78 aa)) enclose the GIY-YIG domain. One can recognise a UVR domain in the interval 199 to 234 (SKLLDETEIKMKEAIKKEDFEAAIKLKETKRSLIEI).

Belongs to the UvrC family. In terms of assembly, interacts with UvrB in an incision complex.

It is found in the cytoplasm. The UvrABC repair system catalyzes the recognition and processing of DNA lesions. UvrC both incises the 5' and 3' sides of the lesion. The N-terminal half is responsible for the 3' incision and the C-terminal half is responsible for the 5' incision. The polypeptide is UvrABC system protein C (Borrelia hermsii (strain HS1 / DAH)).